Consider the following 318-residue polypeptide: Methionyl-tRNA formyltransferase (318 aa).

A (6S)-5,6,7,8-tetrahydrofolate-binding site is contributed by 110–113 (SLLP).

This sequence belongs to the Fmt family.

It carries out the reaction L-methionyl-tRNA(fMet) + (6R)-10-formyltetrahydrofolate = N-formyl-L-methionyl-tRNA(fMet) + (6S)-5,6,7,8-tetrahydrofolate + H(+). Its function is as follows. Attaches a formyl group to the free amino group of methionyl-tRNA(fMet). The formyl group appears to play a dual role in the initiator identity of N-formylmethionyl-tRNA by promoting its recognition by IF2 and preventing the misappropriation of this tRNA by the elongation apparatus. This chain is Methionyl-tRNA formyltransferase, found in Lacticaseibacillus casei (strain BL23) (Lactobacillus casei).